Consider the following 190-residue polypeptide: 6,7-dimethyl-8-ribityllumazine synthase (190 aa).

5-amino-6-(D-ribitylamino)uracil is bound by residues phenylalanine 23, 61–63 (SFE), and 85–87 (AVI). Position 90 to 91 (90 to 91 (QT)) interacts with (2S)-2-hydroxy-3-oxobutyl phosphate. Catalysis depends on histidine 93, which acts as the Proton donor. Residue phenylalanine 118 coordinates 5-amino-6-(D-ribitylamino)uracil. Arginine 132 contacts (2S)-2-hydroxy-3-oxobutyl phosphate.

Belongs to the DMRL synthase family.

It catalyses the reaction (2S)-2-hydroxy-3-oxobutyl phosphate + 5-amino-6-(D-ribitylamino)uracil = 6,7-dimethyl-8-(1-D-ribityl)lumazine + phosphate + 2 H2O + H(+). It participates in cofactor biosynthesis; riboflavin biosynthesis; riboflavin from 2-hydroxy-3-oxobutyl phosphate and 5-amino-6-(D-ribitylamino)uracil: step 1/2. Functionally, catalyzes the formation of 6,7-dimethyl-8-ribityllumazine by condensation of 5-amino-6-(D-ribitylamino)uracil with 3,4-dihydroxy-2-butanone 4-phosphate. This is the penultimate step in the biosynthesis of riboflavin. The protein is 6,7-dimethyl-8-ribityllumazine synthase of Nostoc sp. (strain PCC 7120 / SAG 25.82 / UTEX 2576).